Consider the following 245-residue polypeptide: Uracil-DNA glycosylase (245 aa).

The active-site Proton acceptor is the Asp-82.

This sequence belongs to the uracil-DNA glycosylase (UDG) superfamily. UNG family.

The protein resides in the cytoplasm. It carries out the reaction Hydrolyzes single-stranded DNA or mismatched double-stranded DNA and polynucleotides, releasing free uracil.. Functionally, excises uracil residues from the DNA which can arise as a result of misincorporation of dUMP residues by DNA polymerase or due to deamination of cytosine. The polypeptide is Uracil-DNA glycosylase (Deinococcus geothermalis (strain DSM 11300 / CIP 105573 / AG-3a)).